The following is a 262-amino-acid chain: Ribosome-recycling factor, mitochondrial (262 aa).

A mitochondrion-targeting transit peptide spans 1 to 55 (MALGIRCFRLLHPAFSSYLADLSRPVSEVPMKTVRGRQRDHIQYSAHPAVPVRQF).

It belongs to the RRF family.

It localises to the mitochondrion. In terms of biological role, responsible for the disassembly of ribosomes from messenger RNA at the termination of mitochondrial protein biosynthesis. Acts in collaboration with GFM2. Promotes mitochondrial ribosome recycling by dissolution of intersubunit contacts. The sequence is that of Ribosome-recycling factor, mitochondrial (Mrrf) from Rattus norvegicus (Rat).